The primary structure comprises 603 residues: MSCRSYRVSSGRRVGSFSSCSAMAPQHLNRFRSSSVSCRSGPGFRGLGGFGSRSVINFGSSSPRIAVGCSRPVRCGVGFGAGSGMAFGSGDGLGFRASSGVGLGFGAGGCPSYGFGGPGFGGPGFGGPGFGYRIGGIGGPSAPAITAVTVNQSLLTPLNLEIDPNAQRVKRDEKEQIKTLNNKFASFIDKVRFLEQQNKLLETKWSFLQEQKCARSNLEPLFDNYITNLRRQLDVLSSDQARLQAERNHLQDILEGFKKKYEEEVVFRANAENEFVALKKDVDAAFLNKSDLEANVDTLIQETEFLKALYHEEIEMLQSHISETSVIVKMDNSRDLNLDGIIAEVKAQYEEVARRSRADVESWYQTKYEEMRVTAGQHCDNLRSTRDEINELTRLIQRLKAEIEHTKAQCAKLEAAVAEAEQQGEAALNDAKCKLADLEGALQQAKQDMARQLREYQELMNVKLALDIEIVTYRRLLEGEEIRICEGVGPVNISVSSSRGGVLCGPELVSGSSLSHNGGVTFSTSSSIRATGGVLASSSLRAGGDLLSSGSRGGSVLVGDACAPSIPCALPTEGGFSSCSGGRGNRSSSVRFSSTTTSRRTRY.

A head region spans residues 1–173; sequence MSCRSYRVSS…PNAQRVKRDE (173 aa). Positions 173 to 484 constitute an IF rod domain; sequence EKEQIKTLNN…RLLEGEEIRI (312 aa). A coil 1A region spans residues 174-208; the sequence is KEQIKTLNNKFASFIDKVRFLEQQNKLLETKWSFL. A linker 1 region spans residues 209-218; that stretch reads QEQKCARSNL. Positions 219–319 are coil 1B; that stretch reads EPLFDNYITN…YHEEIEMLQS (101 aa). Residues 320 to 336 form a linker 12 region; it reads HISETSVIVKMDNSRDL. A coil 2 region spans residues 337 to 480; that stretch reads NLDGIIAEVK…VTYRRLLEGE (144 aa). Residues 481–603 are tail; the sequence is EIRICEGVGP…STTTSRRTRY (123 aa). The segment at 579–603 is disordered; sequence CSGGRGNRSSSVRFSSTTTSRRTRY.

The protein belongs to the intermediate filament family. Heterotetramer of two type I and two type II keratins. In skin, only expressed in the suprabasal cells of tail scale epidermis. Suprabasally expressed in stratified squamous epithelia and also in the posterior unit of the complex filiform papillae of tongue. Expressed in rare anatomical sites in which an orthokeratinized stratum corneum would be too soft and a hard keratinized structure would be too rigid to meet the functional requirement of the respective epithelia.

In Mus musculus (Mouse), this protein is Keratin, type II cuticular Hb4 (Krt84).